The primary structure comprises 400 residues: Lysophospholipid transporter LplT (400 aa).

Transmembrane regions (helical) follow at residues 19-39 (VIVA…ATLA), 53-73 (VLQM…GQIA), 91-111 (AGAA…LVGI), 139-159 (LMEA…GVLA), 164-184 (IAAL…NLFI), 227-247 (LFWG…PVAL), 257-277 (YLNA…AKLV), 281-301 (TVSR…IFSL), 304-324 (ALLP…FFVV), 352-372 (NSAM…GVPA), and 373-393 (VAIG…LWIW).

It belongs to the major facilitator superfamily. LplT (TC 2.A.1.42) family.

The protein resides in the cell inner membrane. In terms of biological role, catalyzes the facilitated diffusion of 2-acyl-glycero-3-phosphoethanolamine (2-acyl-GPE) into the cell. In Salmonella gallinarum (strain 287/91 / NCTC 13346), this protein is Lysophospholipid transporter LplT.